Here is a 335-residue protein sequence, read N- to C-terminus: Fructose-1,6-bisphosphatase class 1 (335 aa).

Residues E94, D113, L115, and D116 each coordinate Mg(2+). Substrate is bound by residues 116–119 (DGSS), N208, and K274. E280 is a Mg(2+) binding site.

The protein belongs to the FBPase class 1 family. Homotetramer. Mg(2+) serves as cofactor.

The protein localises to the cytoplasm. The enzyme catalyses beta-D-fructose 1,6-bisphosphate + H2O = beta-D-fructose 6-phosphate + phosphate. The protein operates within carbohydrate biosynthesis; gluconeogenesis. In Polynucleobacter asymbioticus (strain DSM 18221 / CIP 109841 / QLW-P1DMWA-1) (Polynucleobacter necessarius subsp. asymbioticus), this protein is Fructose-1,6-bisphosphatase class 1.